The sequence spans 450 residues: uncharacterized protein (450 aa).

Belongs to the herpesviridae BBLF2 family.

This is an uncharacterized protein from Saimiriine herpesvirus 2 (strain 11) (SaHV-2).